The sequence spans 166 residues: 3-hydroxyacyl-[acyl-carrier-protein] dehydratase FabZ (166 aa).

His-72 is a catalytic residue.

The protein belongs to the thioester dehydratase family. FabZ subfamily.

The protein localises to the cytoplasm. The catalysed reaction is a (3R)-hydroxyacyl-[ACP] = a (2E)-enoyl-[ACP] + H2O. Functionally, involved in unsaturated fatty acids biosynthesis. Catalyzes the dehydration of short chain beta-hydroxyacyl-ACPs and long chain saturated and unsaturated beta-hydroxyacyl-ACPs. The chain is 3-hydroxyacyl-[acyl-carrier-protein] dehydratase FabZ from Synechococcus sp. (strain JA-3-3Ab) (Cyanobacteria bacterium Yellowstone A-Prime).